The sequence spans 133 residues: Surface presentation of antigens protein SpaK (133 aa).

The protein belongs to the SpaK family. In terms of assembly, homodimer.

Functionally, required for surface presentation of invasion plasmid antigens. Chaperone specialized in the storage of effectors within the bacterial cytoplasm, maintaining them in a secretion-competent state, and allowing their immediate delivery to target cells upon contact of the bacterium with the host cells. Has been shown to chaperone IpaA, IpgB1, OspC3 and probably also OspB. The polypeptide is Surface presentation of antigens protein SpaK (spaK) (Shigella flexneri).